The primary structure comprises 126 residues: Histone H2B type 1-O (126 aa).

The span at 1 to 12 shows a compositional bias: low complexity; the sequence is MPDPAKSAPAPK. Residues 1–35 form a disordered region; that stretch reads MPDPAKSAPAPKKGSKKAVTKAQKKDGKKRKRSRK. Pro-2 is subject to N-acetylproline; partial. At Lys-6 the chain carries N6-(2-hydroxyisobutyryl)lysine; alternate. Position 6 is an N6-(beta-hydroxybutyryl)lysine; alternate (Lys-6). An N6-acetyllysine; alternate modification is found at Lys-6. Lys-6 carries the N6-butyryllysine; alternate modification. Lys-6 carries the post-translational modification N6-crotonyllysine; alternate. Residue Lys-6 is modified to N6-lactoyllysine; alternate. Lys-6 is covalently cross-linked (Glycyl lysine isopeptide (Lys-Gly) (interchain with G-Cter in SUMO2); alternate). Position 7 is an ADP-ribosylserine (Ser-7). At Lys-12 the chain carries N6-(beta-hydroxybutyryl)lysine; alternate. An N6-acetyllysine; alternate mark is found at Lys-12 and Lys-13. Lys-12 and Lys-13 each carry N6-crotonyllysine; alternate. Residue Lys-12 is modified to N6-lactoyllysine; alternate. Position 13 is an N6-(2-hydroxyisobutyryl)lysine; alternate (Lys-13). A Phosphoserine; by STK4/MST1 modification is found at Ser-15. 4 positions are modified to N6-acetyllysine; alternate: Lys-16, Lys-17, Lys-21, and Lys-24. Residues Lys-16, Lys-17, Lys-21, and Lys-24 each carry the N6-crotonyllysine; alternate modification. 4 positions are modified to N6-lactoyllysine; alternate: Lys-16, Lys-17, Lys-21, and Lys-24. Lys-17 and Lys-21 each carry N6-(beta-hydroxybutyryl)lysine; alternate. Lys-17 is subject to N6-glutaryllysine; alternate. N6-(2-hydroxyisobutyryl)lysine; alternate occurs at positions 21 and 24. Lys-21 is modified (N6-butyryllysine; alternate). Residue Lys-21 forms a Glycyl lysine isopeptide (Lys-Gly) (interchain with G-Cter in SUMO2); alternate linkage. Lys-25 is subject to N6-(2-hydroxyisobutyryl)lysine. Residue Lys-35 is modified to N6-(2-hydroxyisobutyryl)lysine; alternate. At Lys-35 the chain carries N6-(beta-hydroxybutyryl)lysine; alternate. N6-crotonyllysine; alternate is present on Lys-35. Lys-35 carries the post-translational modification N6-glutaryllysine; alternate. Lys-35 is subject to N6-succinyllysine; alternate. Lys-35 participates in a covalent cross-link: Glycyl lysine isopeptide (Lys-Gly) (interchain with G-Cter in ubiquitin); alternate. Glu-36 is subject to PolyADP-ribosyl glutamic acid. Ser-37 carries the post-translational modification Phosphoserine; by AMPK. N6-(2-hydroxyisobutyryl)lysine; alternate is present on residues Lys-44, Lys-47, and Lys-58. At Lys-44 the chain carries N6-lactoyllysine; alternate. Lys-44 and Lys-47 each carry N6-glutaryllysine; alternate. Position 47 is an N6-methyllysine; alternate (Lys-47). At Lys-58 the chain carries N6,N6-dimethyllysine; alternate. Residue Arg-80 is modified to Dimethylated arginine. Position 86 is an N6-(2-hydroxyisobutyryl)lysine; alternate (Lys-86). Lys-86 is modified (N6-(beta-hydroxybutyryl)lysine; alternate). Lys-86 carries the N6-acetyllysine; alternate modification. Residue Lys-86 is modified to N6-lactoyllysine; alternate. The residue at position 86 (Lys-86) is an N6,N6,N6-trimethyllysine; alternate. Omega-N-methylarginine occurs at positions 87 and 93. Lys-109 bears the N6-(2-hydroxyisobutyryl)lysine; alternate mark. Lys-109 bears the N6-lactoyllysine; alternate mark. Lys-109 carries the post-translational modification N6-glutaryllysine; alternate. N6-methyllysine; alternate is present on Lys-109. The O-linked (GlcNAc) serine glycan is linked to Ser-113. Phosphothreonine is present on Thr-116. An N6-(2-hydroxyisobutyryl)lysine; alternate mark is found at Lys-117 and Lys-121. Residues Lys-117 and Lys-121 each carry the N6-(beta-hydroxybutyryl)lysine; alternate modification. Lys-117 and Lys-121 each carry N6-lactoyllysine; alternate. Residues Lys-117 and Lys-121 each carry the N6-glutaryllysine; alternate modification. Residues Lys-117 and Lys-121 each carry the N6-succinyllysine; alternate modification. Residue Lys-117 is modified to N6-malonyllysine; alternate. At Lys-117 the chain carries N6-methylated lysine; alternate. Lys-121 participates in a covalent cross-link: Glycyl lysine isopeptide (Lys-Gly) (interchain with G-Cter in ubiquitin); alternate.

This sequence belongs to the histone H2B family. The nucleosome is a histone octamer containing two molecules each of H2A, H2B, H3 and H4 assembled in one H3-H4 heterotetramer and two H2A-H2B heterodimers. The octamer wraps approximately 147 bp of DNA. Post-translationally, monoubiquitination at Lys-35 (H2BK34Ub) by the MSL1/MSL2 dimer is required for histone H3 'Lys-4' (H3K4me) and 'Lys-79' (H3K79me) methylation and transcription activation at specific gene loci, such as HOXA9 and MEIS1 loci. Similarly, monoubiquitination at Lys-121 (H2BK120Ub) by the RNF20/40 complex gives a specific tag for epigenetic transcriptional activation and is also prerequisite for histone H3 'Lys-4' and 'Lys-79' methylation. It also functions cooperatively with the FACT dimer to stimulate elongation by RNA polymerase II. H2BK120Ub also acts as a regulator of mRNA splicing: deubiquitination by USP49 is required for efficient cotranscriptional splicing of a large set of exons. In terms of processing, phosphorylation at Ser-37 (H2BS36ph) by AMPK in response to stress promotes transcription. Phosphorylated on Ser-15 (H2BS14ph) by STK4/MST1 during apoptosis; which facilitates apoptotic chromatin condensation. Also phosphorylated on Ser-15 in response to DNA double strand breaks (DSBs), and in correlation with somatic hypermutation and immunoglobulin class-switch recombination. GlcNAcylation at Ser-113 promotes monoubiquitination of Lys-121. It fluctuates in response to extracellular glucose, and associates with transcribed genes. Post-translationally, ADP-ribosylated by PARP1 or PARP2 on Ser-7 (H2BS6ADPr) in response to DNA damage. H2BS6ADPr promotes recruitment of CHD1L. Poly ADP-ribosylation on Glu-36 (H2BE35ADPr) by PARP1 regulates adipogenesis: it inhibits phosphorylation at Ser-37 (H2BS36ph), thereby blocking expression of pro-adipogenetic genes. In terms of processing, crotonylation (Kcr) is specifically present in male germ cells and marks testis-specific genes in post-meiotic cells, including X-linked genes that escape sex chromosome inactivation in haploid cells. Crotonylation marks active promoters and enhancers and confers resistance to transcriptional repressors. It is also associated with post-meiotically activated genes on autosomes. Lactylated in macrophages by EP300/P300 by using lactoyl-CoA directly derived from endogenous or exogenous lactate, leading to stimulates gene transcription.

The protein resides in the nucleus. It localises to the chromosome. Its function is as follows. Core component of nucleosome. Nucleosomes wrap and compact DNA into chromatin, limiting DNA accessibility to the cellular machineries which require DNA as a template. Histones thereby play a central role in transcription regulation, DNA repair, DNA replication and chromosomal stability. DNA accessibility is regulated via a complex set of post-translational modifications of histones, also called histone code, and nucleosome remodeling. This is Histone H2B type 1-O from Homo sapiens (Human).